Consider the following 247-residue polypeptide: Ubiquinone biosynthesis O-methyltransferase (247 aa).

Positions 41, 72, 93, and 136 each coordinate S-adenosyl-L-methionine.

It belongs to the methyltransferase superfamily. UbiG/COQ3 family.

The catalysed reaction is a 3-demethylubiquinol + S-adenosyl-L-methionine = a ubiquinol + S-adenosyl-L-homocysteine + H(+). It catalyses the reaction a 3-(all-trans-polyprenyl)benzene-1,2-diol + S-adenosyl-L-methionine = a 2-methoxy-6-(all-trans-polyprenyl)phenol + S-adenosyl-L-homocysteine + H(+). The protein operates within cofactor biosynthesis; ubiquinone biosynthesis. Its function is as follows. O-methyltransferase that catalyzes the 2 O-methylation steps in the ubiquinone biosynthetic pathway. The chain is Ubiquinone biosynthesis O-methyltransferase from Bartonella tribocorum (strain CIP 105476 / IBS 506).